The chain runs to 319 residues: Ribonuclease Z (319 aa).

Zn(2+)-binding residues include histidine 62, histidine 64, aspartate 66, histidine 67, histidine 145, aspartate 216, and histidine 274. The active-site Proton acceptor is aspartate 66.

Belongs to the RNase Z family. As to quaternary structure, homodimer. Zn(2+) is required as a cofactor.

The enzyme catalyses Endonucleolytic cleavage of RNA, removing extra 3' nucleotides from tRNA precursor, generating 3' termini of tRNAs. A 3'-hydroxy group is left at the tRNA terminus and a 5'-phosphoryl group is left at the trailer molecule.. Zinc phosphodiesterase, which displays some tRNA 3'-processing endonuclease activity. Probably involved in tRNA maturation, by removing a 3'-trailer from precursor tRNA. The protein is Ribonuclease Z of Synechococcus sp. (strain CC9902).